A 319-amino-acid chain; its full sequence is Ribosomal RNA small subunit methyltransferase H (319 aa).

S-adenosyl-L-methionine contacts are provided by residues 52–54, D70, F100, D126, and Q133; that span reads GGH. The segment at 289 to 319 is disordered; sequence PKPLSPSELERQRNPRARSAKLRVAARSSQM.

The protein belongs to the methyltransferase superfamily. RsmH family.

It is found in the cytoplasm. It carries out the reaction cytidine(1402) in 16S rRNA + S-adenosyl-L-methionine = N(4)-methylcytidine(1402) in 16S rRNA + S-adenosyl-L-homocysteine + H(+). Specifically methylates the N4 position of cytidine in position 1402 (C1402) of 16S rRNA. The chain is Ribosomal RNA small subunit methyltransferase H from Synechococcus sp. (strain JA-2-3B'a(2-13)) (Cyanobacteria bacterium Yellowstone B-Prime).